The primary structure comprises 369 residues: MKAKRIVFKVGTSSLTNADGSLSRAKVKEITRQLALLHEAGHELILVSSGAIAAGFSSLGFKKRPTKVVDKQASAAVGQGLLLEEYTTNLLLKQIISAQILLTQDDFADKRRYKNAHQALSVLLNRGAIPVINENDSVAIEELKVGDNDTLSAQVAAMVQADLLVLLTDVDGLYTANPSTNPDARRLEKIEKISSELIDIAGGAGTSNGTGGMLTKIKAATLATMSGVPVYICSSLKTDALLEAAEETKDGSLFLAQEKGLKTQKQWLAFYAKSQGEIYVDQGAADALRNKGKSLLVSGLVSVSGSFAYQDTVTVYEEGSGAILGKGRVRFGELALKDMLKSNKPKGVVIHRDDWISLTPELNDLFAEF.

Lysine 9 serves as a coordination point for ATP. Residues serine 49, aspartate 136, and asparagine 148 each contribute to the substrate site. ATP contacts are provided by residues 168 to 169 (TD) and 210 to 216 (TGGMLTK). A PUA domain is found at 275 to 355 (QGEIYVDQGA…KGVVIHRDDW (81 aa)).

Belongs to the glutamate 5-kinase family.

Its subcellular location is the cytoplasm. It carries out the reaction L-glutamate + ATP = L-glutamyl 5-phosphate + ADP. It participates in amino-acid biosynthesis; L-proline biosynthesis; L-glutamate 5-semialdehyde from L-glutamate: step 1/2. Its function is as follows. Catalyzes the transfer of a phosphate group to glutamate to form L-glutamate 5-phosphate. This chain is Glutamate 5-kinase, found in Streptococcus gordonii (strain Challis / ATCC 35105 / BCRC 15272 / CH1 / DL1 / V288).